A 1526-amino-acid chain; its full sequence is Cell wall protein IFF4 (1526 aa).

The N-terminal stretch at 1 to 20 (MKFLQKFIITVALLTNIVFA) is a signal peptide. 2 N-linked (GlcNAc...) asparagine glycosylation sites follow: asparagine 93 and asparagine 498. Residues 512 to 541 (SSAGGSSFPEETHMLQTSDSDLSSTAGSES) form a disordered region. Residues 525–541 (MLQTSDSDLSSTAGSES) are compositionally biased toward polar residues. N-linked (GlcNAc...) asparagine glycosylation occurs at asparagine 637. Residues 1180-1207 (WNGAKSDSPHTSESDITSQYNSHSTSVA) are disordered. Over residues 1193 to 1207 (SDITSQYNSHSTSVA) the composition is skewed to polar residues. Residues asparagine 1451, asparagine 1463, asparagine 1479, asparagine 1502, and asparagine 1506 are each glycosylated (N-linked (GlcNAc...) asparagine). A disordered region spans residues 1455–1483 (SSVSGYPTNRSDSNGYANTPTTGSNTSGD). Asparagine 1502 is lipidated: GPI-anchor amidated asparagine. Residues 1503–1526 (GSTNISNKYLKFLGTVVSILILLI) constitute a propeptide, removed in mature form.

It belongs to the HYR1/IFF family. In terms of processing, the GPI-anchor is attached to the protein in the endoplasmic reticulum and serves to target the protein to the cell surface. There, the glucosamine-inositol phospholipid moiety is cleaved off and the GPI-$modified mannoprotein is covalently attached via its lipidless GPI glycan remnant to the 1,6-beta-glucan of the outer cell wall layer.

The protein resides in the secreted. It localises to the cell wall. Its subcellular location is the membrane. Its function is as follows. GPI-anchored cell wall protein involved in cell wall organization, hyphal growth, as well as in host-fungal interaction and virulence. Plays a role in adherence to plastic and to host epithelial cells. Promotes the tissue fungal burden during murine vaginal candidiasis. Also increases susceptibility to neutrophil-mediated killing. Furthermore, contributes to the severity of hematogenously disseminated candidiasis in normal mice, but not in neutropenic mice. The polypeptide is Cell wall protein IFF4 (IFF4) (Candida albicans (strain SC5314 / ATCC MYA-2876) (Yeast)).